The primary structure comprises 382 residues: uncharacterized protein (382 aa).

Transmembrane regions (helical) follow at residues 8–28 (VMLL…LNTL), 45–65 (MVSS…GYLI), 75–95 (YLAS…VGFW), 102–122 (FIAG…LMCS), 131–151 (LLAA…LLVS), 157–177 (LLHV…PLLF), 204–224 (LGVN…GLMP), 231–251 (GMAN…GILG), 270–290 (VQVF…AMAP), 291–311 (ALFI…AWAC), 325–345 (ALLL…AMLM), and 349–369 (SDNL…LMLL).

It belongs to the major facilitator superfamily. YcaD (TC 2.A.1.26) family.

Its subcellular location is the cell inner membrane. This is an uncharacterized protein from Salmonella dublin (strain CT_02021853).